The following is a 127-amino-acid chain: MRDSLLVFCGAGLGGLLRHGLNQVSLRLALFGFPWMTCFINISGSLAMGLLVGYLAGHGDSRFPQSLRLFLATGVLGGYTTFSTFSLENALLIERGAVGLAVLYSLVSVGLGLGGLFLGLTLTRSLS.

The next 3 helical transmembrane spans lie at 28–48, 73–93, and 98–118; these read LALF…SLAM, TGVL…ALLI, and VGLA…GLFL. Na(+)-binding residues include G77 and T80.

Belongs to the fluoride channel Fluc/FEX (TC 1.A.43) family.

Its subcellular location is the cell inner membrane. The catalysed reaction is fluoride(in) = fluoride(out). Its activity is regulated as follows. Na(+) is not transported, but it plays an essential structural role and its presence is essential for fluoride channel function. Functionally, fluoride-specific ion channel. Important for reducing fluoride concentration in the cell, thus reducing its toxicity. This Beijerinckia indica subsp. indica (strain ATCC 9039 / DSM 1715 / NCIMB 8712) protein is Fluoride-specific ion channel FluC.